Consider the following 379-residue polypeptide: Homoserine O-succinyltransferase (379 aa).

An AB hydrolase-1 domain is found at 51 to 360 (NAVLICHALS…DAPQGHDAFL (310 aa)). S157 acts as the Nucleophile in catalysis. Residue R227 participates in substrate binding. Active-site residues include D323 and H356. D357 contributes to the substrate binding site.

The protein belongs to the AB hydrolase superfamily. MetX family. As to quaternary structure, homodimer.

It is found in the cytoplasm. It catalyses the reaction L-homoserine + succinyl-CoA = O-succinyl-L-homoserine + CoA. The protein operates within amino-acid biosynthesis; L-methionine biosynthesis via de novo pathway; O-succinyl-L-homoserine from L-homoserine: step 1/1. Its function is as follows. Transfers a succinyl group from succinyl-CoA to L-homoserine, forming succinyl-L-homoserine. In Pseudomonas paraeruginosa (strain DSM 24068 / PA7) (Pseudomonas aeruginosa (strain PA7)), this protein is Homoserine O-succinyltransferase.